Consider the following 315-residue polypeptide: Tyrosine recombinase XerC (315 aa).

Residues 1–103 (MIASFYAFLD…AIKSFAKFCV (103 aa)) form the Core-binding (CB) domain. One can recognise a Tyr recombinase domain in the interval 124 to 306 (ELPSPLTYEQ…SMKLKKQIHD (183 aa)). Catalysis depends on residues Arg164, Lys188, His258, Arg261, and His284. Tyr293 (O-(3'-phospho-DNA)-tyrosine intermediate) is an active-site residue.

Belongs to the 'phage' integrase family. XerC subfamily. In terms of assembly, forms a cyclic heterotetrameric complex composed of two molecules of XerC and two molecules of XerD.

It is found in the cytoplasm. Site-specific tyrosine recombinase, which acts by catalyzing the cutting and rejoining of the recombining DNA molecules. The XerC-XerD complex is essential to convert dimers of the bacterial chromosome into monomers to permit their segregation at cell division. It also contributes to the segregational stability of plasmids. This chain is Tyrosine recombinase XerC, found in Chlamydia muridarum (strain MoPn / Nigg).